The primary structure comprises 133 residues: Small ribosomal subunit protein uS8 (133 aa).

It belongs to the universal ribosomal protein uS8 family. In terms of assembly, part of the 30S ribosomal subunit. Contacts proteins S5 and S12.

In terms of biological role, one of the primary rRNA binding proteins, it binds directly to 16S rRNA central domain where it helps coordinate assembly of the platform of the 30S subunit. The chain is Small ribosomal subunit protein uS8 from Gloeobacter violaceus (strain ATCC 29082 / PCC 7421).